Here is a 187-residue protein sequence, read N- to C-terminus: Putative glutathione-dependent formaldehyde-activating enzyme (187 aa).

The region spanning 20-166 (FQGGVLKCKC…FESLGLESYD (147 aa)) is the CENP-V/GFA domain. The Zn(2+) site is built by Cys27, Cys29, Cys48, Cys50, Cys53, Cys95, and Cys98.

This sequence belongs to the Gfa family. Zn(2+) is required as a cofactor.

It carries out the reaction S-(hydroxymethyl)glutathione = glutathione + formaldehyde. Its pathway is one-carbon metabolism; formaldehyde degradation; formate from formaldehyde (glutathione route): step 1/3. In terms of biological role, catalyzes the condensation of formaldehyde and glutathione to S-hydroxymethylglutathione. The chain is Putative glutathione-dependent formaldehyde-activating enzyme from Verticillium alfalfae (strain VaMs.102 / ATCC MYA-4576 / FGSC 10136) (Verticillium wilt of alfalfa).